A 271-amino-acid polypeptide reads, in one-letter code: Ribosomal RNA small subunit methyltransferase A (271 aa).

His-11, Leu-13, Gly-38, Glu-58, Asp-86, and Asn-101 together coordinate S-adenosyl-L-methionine.

Belongs to the class I-like SAM-binding methyltransferase superfamily. rRNA adenine N(6)-methyltransferase family. RsmA subfamily.

It is found in the cytoplasm. It carries out the reaction adenosine(1518)/adenosine(1519) in 16S rRNA + 4 S-adenosyl-L-methionine = N(6)-dimethyladenosine(1518)/N(6)-dimethyladenosine(1519) in 16S rRNA + 4 S-adenosyl-L-homocysteine + 4 H(+). Its function is as follows. Specifically dimethylates two adjacent adenosines (A1518 and A1519) in the loop of a conserved hairpin near the 3'-end of 16S rRNA in the 30S particle. May play a critical role in biogenesis of 30S subunits. This is Ribosomal RNA small subunit methyltransferase A from Helicobacter pylori (strain P12).